Here is a 217-residue protein sequence, read N- to C-terminus: 3-oxo-tetronate 4-phosphate decarboxylase (217 aa).

Zn(2+)-binding residues include His-93 and His-95. Tyr-120 acts as the Proton donor in catalysis.

The protein belongs to the aldolase class II family. AraD/FucA subfamily. Zn(2+) is required as a cofactor.

It catalyses the reaction 3-dehydro-4-O-phospho-D-erythronate + H(+) = dihydroxyacetone phosphate + CO2. The catalysed reaction is 3-dehydro-4-O-phospho-L-erythronate + H(+) = dihydroxyacetone phosphate + CO2. Catalyzes the decarboxylation of 3-oxo-tetronate 4-phosphate to dihydroxyacetone phosphate (DHAP) and CO(2). The chain is 3-oxo-tetronate 4-phosphate decarboxylase from Cupriavidus necator (strain ATCC 17699 / DSM 428 / KCTC 22496 / NCIMB 10442 / H16 / Stanier 337) (Ralstonia eutropha).